The primary structure comprises 155 residues: FAD synthase (155 aa).

Residues 9 to 10 (TF), 14 to 17 (HPGH), and D92 contribute to the ATP site.

Belongs to the archaeal FAD synthase family. In terms of assembly, homodimer. It depends on a divalent metal cation as a cofactor.

It catalyses the reaction FMN + ATP + H(+) = FAD + diphosphate. The protein operates within cofactor biosynthesis; FAD biosynthesis; FAD from FMN: step 1/1. Functionally, catalyzes the transfer of the AMP portion of ATP to flavin mononucleotide (FMN) to produce flavin adenine dinucleotide (FAD) coenzyme. The chain is FAD synthase from Archaeoglobus profundus (strain DSM 5631 / JCM 9629 / NBRC 100127 / Av18).